Here is a 618-residue protein sequence, read N- to C-terminus: 1-deoxy-D-xylulose-5-phosphate synthase (618 aa).

Thiamine diphosphate contacts are provided by residues His72 and 113–115; that span reads GHA. A Mg(2+)-binding site is contributed by Asp144. Residues 145–146, Asn173, His284, and Glu359 each bind thiamine diphosphate; that span reads GA. Asn173 lines the Mg(2+) pocket.

This sequence belongs to the transketolase family. DXPS subfamily. Homodimer. It depends on Mg(2+) as a cofactor. The cofactor is thiamine diphosphate.

The enzyme catalyses D-glyceraldehyde 3-phosphate + pyruvate + H(+) = 1-deoxy-D-xylulose 5-phosphate + CO2. Its pathway is metabolic intermediate biosynthesis; 1-deoxy-D-xylulose 5-phosphate biosynthesis; 1-deoxy-D-xylulose 5-phosphate from D-glyceraldehyde 3-phosphate and pyruvate: step 1/1. Catalyzes the acyloin condensation reaction between C atoms 2 and 3 of pyruvate and glyceraldehyde 3-phosphate to yield 1-deoxy-D-xylulose-5-phosphate (DXP). The sequence is that of 1-deoxy-D-xylulose-5-phosphate synthase from Dictyoglomus thermophilum (strain ATCC 35947 / DSM 3960 / H-6-12).